We begin with the raw amino-acid sequence, 348 residues long: MTAPSQVLKIRRPDDWHLHLRDGDMLKTVVPYTSEIYGRAIVMPNLAPPVTTVEAAVAYRQRILDAVPAGHDFTPLMTCYLTDSLDPNELERGFNEGVFTAAKLYPANATTNSSHGVTSIDAIMPVLERMEKIGMPLLVHGEVTHADIDIFDREARFIESVMEPLRQRLTALKVVFEHITTKDAADYVRDGNERLAATITPQHLMFNRNHMLVGGVRPHLYCLPILKRNIHQQALRELVASGFNRVFLGTDSAPHARHRKESSCGCAGCFNAPTALGSYATVFEEMNALQHFEAFCSVNGPQFYGLPVNDTFIELVREEQQVAESIALTDDTLVPFLAGETVRWSVKQ.

Zn(2+)-binding residues include His-17 and His-19. Substrate contacts are provided by residues 19-21 (HLR) and Asn-45. 3 residues coordinate Zn(2+): Lys-103, His-140, and His-178. Lys-103 carries the post-translational modification N6-carboxylysine. Position 140 (His-140) interacts with substrate. Leu-223 serves as a coordination point for substrate. Asp-251 contributes to the Zn(2+) binding site. Asp-251 is a catalytic residue. Positions 255 and 267 each coordinate substrate.

The protein belongs to the metallo-dependent hydrolases superfamily. DHOase family. Class II DHOase subfamily. As to quaternary structure, homodimer. The cofactor is Zn(2+).

The enzyme catalyses (S)-dihydroorotate + H2O = N-carbamoyl-L-aspartate + H(+). It participates in pyrimidine metabolism; UMP biosynthesis via de novo pathway; (S)-dihydroorotate from bicarbonate: step 3/3. Its function is as follows. Catalyzes the reversible cyclization of carbamoyl aspartate to dihydroorotate. The chain is Dihydroorotase from Shigella sonnei (strain Ss046).